The chain runs to 430 residues: ATP-dependent RNA helicase RhlB (430 aa).

The Q motif signature appears at 9-37 (QKFSDFALHPQVIEALETKGFHNCTPIQA). Residues 40-219 (LPFTLSGRDV…FENMNNAEYV (180 aa)) form the Helicase ATP-binding domain. 53-60 (AQTGTGKT) is a binding site for ATP. Residues 165–168 (DEAD) carry the DEAD box motif. In terms of domain architecture, Helicase C-terminal spans 245–390 (RLLQTLIEEE…VSRYNSDALM (146 aa)). The disordered stretch occupies residues 388–430 (ALMTDLPPPKRLTRNRSGNGPRRGGNNNRRSSASRSPNRKRSG). A compositionally biased stretch (low complexity) spans 402–423 (NRSGNGPRRGGNNNRRSSASRS).

The protein belongs to the DEAD box helicase family. RhlB subfamily. In terms of assembly, component of the RNA degradosome, which is a multiprotein complex involved in RNA processing and mRNA degradation.

It localises to the cytoplasm. It carries out the reaction ATP + H2O = ADP + phosphate + H(+). DEAD-box RNA helicase involved in RNA degradation. Has RNA-dependent ATPase activity and unwinds double-stranded RNA. The protein is ATP-dependent RNA helicase RhlB of Erwinia tasmaniensis (strain DSM 17950 / CFBP 7177 / CIP 109463 / NCPPB 4357 / Et1/99).